A 540-amino-acid polypeptide reads, in one-letter code: Exopolysaccharide phosphotransferase SCO6022 (540 aa).

The protein belongs to the stealth family.

This Streptomyces coelicolor (strain ATCC BAA-471 / A3(2) / M145) protein is Exopolysaccharide phosphotransferase SCO6022.